Consider the following 294-residue polypeptide: MCPHAHPPAKPDHGATTTPERIVHDEKAQLDFSRDMSYGDYLQLDAILNAQKPLSPAHDEMLFIIQHQTSELWMKLMLHELRAAIANVAADELGSAFKMLARVSRIMEQLVHAWDVLATMTPPEYSAMRPYLGASSGFQSYQYRCIEFALGNKNAAMLQPHAHRSDLLAQVQAAYEAPSLYDEALRLLARRGLAVPASHTERDWTQPYLESAAVEQAWLTVYRDPKQYWDLYQLGEELTDLEDAFRLWRFRHVTTVERIIGFKPGTGGTSGVSYLRKMLDVVLFPEIWKLRTDL.

Residues 63-67 (FIIQH), Tyr-125, and Arg-129 each bind substrate. His-252 contacts heme. Thr-266 is a binding site for substrate.

This sequence belongs to the tryptophan 2,3-dioxygenase family. In terms of assembly, homotetramer. It depends on heme as a cofactor.

The catalysed reaction is L-tryptophan + O2 = N-formyl-L-kynurenine. It participates in amino-acid degradation; L-tryptophan degradation via kynurenine pathway; L-kynurenine from L-tryptophan: step 1/2. Heme-dependent dioxygenase that catalyzes the oxidative cleavage of the L-tryptophan (L-Trp) pyrrole ring and converts L-tryptophan to N-formyl-L-kynurenine. Catalyzes the oxidative cleavage of the indole moiety. In Polaromonas sp. (strain JS666 / ATCC BAA-500), this protein is Tryptophan 2,3-dioxygenase.